A 92-amino-acid chain; its full sequence is Small ribosomal subunit protein uS19 (92 aa).

Belongs to the universal ribosomal protein uS19 family.

Functionally, protein S19 forms a complex with S13 that binds strongly to the 16S ribosomal RNA. This is Small ribosomal subunit protein uS19 from Rhodopseudomonas palustris (strain BisB5).